The following is an 809-amino-acid chain: Lon protease (809 aa).

Residues 20–216 form the Lon N-terminal domain; that stretch reads LPLLALRDVV…ELMNYLMNQS (197 aa). An ATP-binding site is contributed by 369–376; it reads GPPGVGKT. The 182-residue stretch at 606-787 folds into the Lon proteolytic domain; that stretch reads EAQVGRVNGL…DEILPLALTS (182 aa). Catalysis depends on residues Ser-693 and Lys-736.

The protein belongs to the peptidase S16 family. As to quaternary structure, homohexamer. Organized in a ring with a central cavity.

It localises to the cytoplasm. The enzyme catalyses Hydrolysis of proteins in presence of ATP.. Functionally, ATP-dependent serine protease that mediates the selective degradation of mutant and abnormal proteins as well as certain short-lived regulatory proteins. Required for cellular homeostasis and for survival from DNA damage and developmental changes induced by stress. Degrades polypeptides processively to yield small peptide fragments that are 5 to 10 amino acids long. Binds to DNA in a double-stranded, site-specific manner. The sequence is that of Lon protease from Acinetobacter baumannii (strain AB307-0294).